Reading from the N-terminus, the 175-residue chain is ATP synthase subunit d, mitochondrial (175 aa).

Ser2 carries the post-translational modification N-acetylserine.

In terms of assembly, F-type ATP synthases have 2 components, the catalytic core F(1) and the membrane-embedded component F(0), linked together by a central stalk and a peripheral stalk. The central stalk, also called rotor shaft, is often seen as part of F(1). The peripheral stalk is seen as part of F(0). F(0) contains the membrane channel next to the rotor. F-type ATP synthases form dimers but each monomer functions independently in ATP generation. The dimer consists of 18 different polypeptides: ATP1 (subunit alpha, part of F(1), 3 molecules per monomer), ATP2 (subunit beta, part of F(1), 3 molecules per monomer), ATP3 (subunit gamma, part of the central stalk), ATP4 (subunit b, part of the peripheral stalk), ATP5/OSCP (subunit 5/OSCP, part of the peripheral stalk), ATP6 (subunit a, part of the peripheral stalk), ATP7 (subunit d, part of the peripheral stalk), ATP8 (subunit 8, part of the peripheral stalk), OLI1 (subunit c, part of the rotor, 10 molecules per monomer), ATP14 (subunit h, part of the peripheral stalk), ATP15 (subunit epsilon, part of the central stalk), ATP16 (subunit delta, part of the central stalk), ATP17 (subunit f, part of the peripheral stalk), ATP18 (subunit i/j, part of the peripheral stalk). Dimer-specific subunits are ATP19 (subunit k, at interface between monomers), ATP20 (subunit g, at interface between monomers), TIM11 (subunit e, at interface between monomers). Also contains subunit L.

It localises to the mitochondrion inner membrane. Its function is as follows. Mitochondrial membrane ATP synthase (F(1)F(0) ATP synthase or Complex V) produces ATP from ADP in the presence of a proton gradient across the membrane which is generated by electron transport complexes of the respiratory chain. F-type ATP synthases consist of two structural domains, F(1) - containing the extramembraneous catalytic core, and F(0) - containing the membrane proton channel, linked together by a central stalk and a peripheral stalk. During catalysis, ATP synthesis in the catalytic domain of F(1) is coupled via a rotary mechanism of the central stalk subunits to proton translocation. Part of the complex F(0) domain and the peripheral stalk, which acts as a stator to hold the catalytic alpha/ATP1(3)beta/ATP2(3) subcomplex and subunit a/ATP6 static relative to the rotary elements. In Pichia angusta (Yeast), this protein is ATP synthase subunit d, mitochondrial.